A 223-amino-acid chain; its full sequence is MTSRIGVITFPGTLDDVDAVRAVRLAGAEPVELWHADEDLKNVDAVVVPGGFSYGDYLRAGAIAAIAPAMKSVVAAAERGTPVLGICNGFQILQEAGLLPGALTRNEGLHFVCRDIYLDVENTSTAWTNQFAEGTKILVPSKHGEGRFQASEETLERLEGEGRVVFRYVENHNGSRNSIAGVCSENGRVVGLMPHPEHAVETLTGPSLDGLGLFQSVLSTLVS.

Residues 4-223 form the Glutamine amidotransferase type-1 domain; sequence RIGVITFPGT…FQSVLSTLVS (220 aa). The Nucleophile role is filled by Cys-87. Active-site residues include His-195 and Glu-197.

As to quaternary structure, part of the FGAM synthase complex composed of 1 PurL, 1 PurQ and 2 PurS subunits.

It localises to the cytoplasm. The catalysed reaction is N(2)-formyl-N(1)-(5-phospho-beta-D-ribosyl)glycinamide + L-glutamine + ATP + H2O = 2-formamido-N(1)-(5-O-phospho-beta-D-ribosyl)acetamidine + L-glutamate + ADP + phosphate + H(+). It carries out the reaction L-glutamine + H2O = L-glutamate + NH4(+). It participates in purine metabolism; IMP biosynthesis via de novo pathway; 5-amino-1-(5-phospho-D-ribosyl)imidazole from N(2)-formyl-N(1)-(5-phospho-D-ribosyl)glycinamide: step 1/2. Part of the phosphoribosylformylglycinamidine synthase complex involved in the purines biosynthetic pathway. Catalyzes the ATP-dependent conversion of formylglycinamide ribonucleotide (FGAR) and glutamine to yield formylglycinamidine ribonucleotide (FGAM) and glutamate. The FGAM synthase complex is composed of three subunits. PurQ produces an ammonia molecule by converting glutamine to glutamate. PurL transfers the ammonia molecule to FGAR to form FGAM in an ATP-dependent manner. PurS interacts with PurQ and PurL and is thought to assist in the transfer of the ammonia molecule from PurQ to PurL. This chain is Phosphoribosylformylglycinamidine synthase subunit PurQ, found in Corynebacterium jeikeium (strain K411).